We begin with the raw amino-acid sequence, 279 residues long: Ribosome maturation factor RimP (279 aa).

Residues 197–279 are disordered; sequence LAEEGEPEEQ…GAPALRPTPK (83 aa). Over residues 199–210 the composition is skewed to acidic residues; that stretch reads EEGEPEEQEEGG.

It belongs to the RimP family.

It is found in the cytoplasm. Its function is as follows. Required for maturation of 30S ribosomal subunits. This Methylocella silvestris (strain DSM 15510 / CIP 108128 / LMG 27833 / NCIMB 13906 / BL2) protein is Ribosome maturation factor RimP.